We begin with the raw amino-acid sequence, 444 residues long: Docking protein 3 (444 aa).

In terms of domain architecture, PH spans 7–123; that stretch reads PVKDGILYQQ…WVDPICQLAF (117 aa). The residue at position 138 (serine 138) is a Phosphoserine. An IRS-type PTB domain is found at 157-261; the sequence is EVTEFPVIVQ…ARQRERLPEL (105 aa). Serine 274 is subject to Phosphoserine. A disordered region spans residues 278-299; sequence LEPPGELREVAPGFELPTPRKL. 2 positions are modified to phosphoserine: serine 308 and serine 314. The residue at position 325 (tyrosine 325) is a Phosphotyrosine. The segment at 354–390 is disordered; the sequence is GLTNGGPEAQEGPPGGRSPLGSPIYHNTEDLSWPGSA. The span at 358–376 shows a compositional bias: low complexity; sequence GGPEAQEGPPGGRSPLGSP. Serine 371 is subject to Phosphoserine.

It belongs to the DOK family. Type A subfamily. In terms of assembly, on tyrosine phosphorylation, interacts with CSK and INPP5D/SHIP1 via their SH2 domains. Both Tyr-325 and Tyr-343 are required for interaction with INPP5D. Only Tyr-325 is required for interaction with CSK. Binds ABL1 through the PTB domain and in a kinase-dependent manner. Does not interact with RasGAP. In terms of processing, constitutively tyrosine-phosphorylated. On IL2 stimulation, phosphorylated on C-terminal tyrosine residues possibly by Src kinases. Can also be phosphorylated by ABL1 kinase. As to expression, predominantly expressed in bone marrow, spleen and lung. Low levels in heart, brain, liver, muscle, thymus, kidney and testis. Highly expressed in B-cells and macrophages.

The protein resides in the cytoplasm. It localises to the cell membrane. Functionally, DOK proteins are enzymatically inert adaptor or scaffolding proteins. They provide a docking platform for the assembly of multimolecular signaling complexes. DOK3 is a negative regulator of JNK signaling in B-cells through interaction with INPP5D/SHIP1. May modulate ABL1 function. This is Docking protein 3 (Dok3) from Mus musculus (Mouse).